Reading from the N-terminus, the 641-residue chain is 1-deoxy-D-xylulose-5-phosphate synthase (641 aa).

Residues H79 and 120–122 each bind thiamine diphosphate; that span reads AHS. D151 provides a ligand contact to Mg(2+). Residues 152-153, N180, Y290, and E372 each bind thiamine diphosphate; that span reads GS. Position 180 (N180) interacts with Mg(2+).

Belongs to the transketolase family. DXPS subfamily. As to quaternary structure, homodimer. Mg(2+) serves as cofactor. The cofactor is thiamine diphosphate.

The catalysed reaction is D-glyceraldehyde 3-phosphate + pyruvate + H(+) = 1-deoxy-D-xylulose 5-phosphate + CO2. The protein operates within metabolic intermediate biosynthesis; 1-deoxy-D-xylulose 5-phosphate biosynthesis; 1-deoxy-D-xylulose 5-phosphate from D-glyceraldehyde 3-phosphate and pyruvate: step 1/1. Its function is as follows. Catalyzes the acyloin condensation reaction between C atoms 2 and 3 of pyruvate and glyceraldehyde 3-phosphate to yield 1-deoxy-D-xylulose-5-phosphate (DXP). The sequence is that of 1-deoxy-D-xylulose-5-phosphate synthase from Rhodopseudomonas palustris (strain BisB18).